The sequence spans 258 residues: UPF0246 protein CGSHiGG_08495 (258 aa).

Belongs to the UPF0246 family.

This Haemophilus influenzae (strain PittGG) protein is UPF0246 protein CGSHiGG_08495.